Reading from the N-terminus, the 218-residue chain is Protein Syd (218 aa).

It belongs to the Syd family.

The protein localises to the cell inner membrane. Its function is as follows. Interacts with the SecY protein in vivo. May bind preferentially to an uncomplexed state of SecY, thus functioning either as a chelating agent for excess SecY in the cell or as a regulatory factor that negatively controls the translocase function. The sequence is that of Protein Syd from Shewanella denitrificans (strain OS217 / ATCC BAA-1090 / DSM 15013).